Reading from the N-terminus, the 463-residue chain is MVRGLVNFTGLSTRLLNICVDSLCKFRKLEKAESLIIDGIRLGVDPDVVTYNTLISGYCRFVGIEEAYAVTRRMRDAGIRPDVATYNSLIAGAARRLMLDHVLYLFDEMLEWGIYPDLWSYNTLMCCYFKLGKHEEAFRVLYKDLQLAGLNPGPDTYNVLLDALCKCGYIDNALELFKEMQSRFKPELMTYNILINGLCKSRRVGTAKWMLTELKKSGYTPNAVTYTTILKLYFKTRRIRRGLQLFLEMKREGYTYDGYAYFAVVSALIKTGRTKEAYEYMQELVRKGRRHDIVSYNTLLNLYFKDGNLDAVDDLLGEIERRGMKADEYTHTIIVNGLLRTGQTRRAEEHFVSMGEMGIGLNLVTCNCLVDGLCKAGHVDRAMRYFESMEVKDEYTYTSVVHNLCKDMRFVCASKLLLSCYNKGIKIPTSARRAVLSGLRMSGCYGEARKAKAEMKLTLVGNS.

PPR repeat units follow at residues Ser12–Pro46, Asp47–Pro81, Asp82–Pro116, Asp117–Pro152, Gly153–Pro186, Glu187–Pro221, Asn222–Tyr256, Asp257–His291, Asp292–Ala326, Asp327–Leu361, Asn362–Lys392, and Asp393–Ile427.

This sequence belongs to the PPR family. P subfamily.

The chain is Putative pentatricopeptide repeat-containing protein At4g17915 from Arabidopsis thaliana (Mouse-ear cress).